The chain runs to 302 residues: uncharacterized protein (302 aa).

It belongs to the HAD-like hydrolase superfamily.

This is an uncharacterized protein from Saccharomyces cerevisiae (strain ATCC 204508 / S288c) (Baker's yeast).